A 510-amino-acid chain; its full sequence is NAD(P)H-quinone oxidoreductase subunit 2 A, chloroplastic (510 aa).

The next 13 membrane-spanning stretches (helical) occupy residues 24–44 (LLLF…GLIL), 57–77 (IPWL…ALLF), 99–119 (IFQF…VEYI), 124–144 (MAIT…MFLC), 149–169 (LITI…LSGY), 183–203 (YLLM…WLYG), 227–247 (PGIS…LSLA), 295–315 (WHLL…LIAI), 323–343 (MLAY…IVGD), 354–374 (YMLF…SFGL), 395–415 (ALSL…AGFF), 418–438 (LHLF…IGLL), and 484–504 (MIVC…IIAI).

The protein belongs to the complex I subunit 2 family. As to quaternary structure, NDH is composed of at least 16 different subunits, 5 of which are encoded in the nucleus.

It localises to the plastid. It is found in the chloroplast thylakoid membrane. It carries out the reaction a plastoquinone + NADH + (n+1) H(+)(in) = a plastoquinol + NAD(+) + n H(+)(out). The enzyme catalyses a plastoquinone + NADPH + (n+1) H(+)(in) = a plastoquinol + NADP(+) + n H(+)(out). Its function is as follows. NDH shuttles electrons from NAD(P)H:plastoquinone, via FMN and iron-sulfur (Fe-S) centers, to quinones in the photosynthetic chain and possibly in a chloroplast respiratory chain. The immediate electron acceptor for the enzyme in this species is believed to be plastoquinone. Couples the redox reaction to proton translocation, and thus conserves the redox energy in a proton gradient. This is NAD(P)H-quinone oxidoreductase subunit 2 A, chloroplastic from Ranunculus macranthus (Large buttercup).